We begin with the raw amino-acid sequence, 144 residues long: Hexon-interlacing protein (144 aa).

Residues 106–133 (LTVMLAKLETLTAQLEELSQKVEELADA) are a coiled coil.

It belongs to the adenoviridae hexon-interlacing protein family. In terms of assembly, homotrimer. Interacts with hexon protein; this interaction tethers the hexons together. Self-interacts with adjacent proteins. Interacts with kinesin light chain KLC1; this interaction leads to capsid disruption at the nuclear pore complex during virus entry into host cell.

Its subcellular location is the virion. It is found in the host nucleus. Functionally, structural component of the virion that acts as a cement protein on the capsid exterior and forms triskelion structures consisting of three molecules that stabilize three hexon trimers at the center of each icosahedral facet and fixes the peripentonal hexons. Dispensable for assembly. During virus entry, recruits the anterograde motor kinesin-1 to the capsid docked at the nuclear pore complex thereby subjecting the docked capsid to a pulling force. The resulting tension leads to capsid disruption, dispersion of capsid fragments toward cell periphery and eventually viral DNA entry into the host nucleus. The protein is Hexon-interlacing protein of Homo sapiens (Human).